We begin with the raw amino-acid sequence, 88 residues long: Large ribosomal subunit protein bL27 (88 aa).

A disordered region spans residues methionine 1 to lysine 24.

It belongs to the bacterial ribosomal protein bL27 family.

In Synechococcus sp. (strain CC9605), this protein is Large ribosomal subunit protein bL27.